The following is a 109-amino-acid chain: Spermidine export protein MdtI (109 aa).

4 helical membrane-spanning segments follow: residues 6–26 (FYPI…NILL), 36–56 (WLGI…AQAV), 64–84 (AYAM…WILF), and 88–108 (LNYK…MIKL).

The protein belongs to the drug/metabolite transporter (DMT) superfamily. Small multidrug resistance (SMR) (TC 2.A.7.1) family. MdtI subfamily. Forms a complex with MdtJ.

Its subcellular location is the cell inner membrane. Catalyzes the excretion of spermidine. The protein is Spermidine export protein MdtI of Yersinia pseudotuberculosis serotype I (strain IP32953).